We begin with the raw amino-acid sequence, 294 residues long: Glutamyl-Q tRNA(Asp) synthetase (294 aa).

L-glutamate is bound by residues 7–11 (RFAPS) and Glu-43. The short motif at 10-20 (PSPSGPLHFGS) is the 'HIGH' region element. Residues Cys-99, Cys-101, Tyr-113, and Cys-117 each contribute to the Zn(2+) site. Positions 168 and 186 each coordinate L-glutamate. The short motif at 224 to 228 (KLSKQ) is the 'KMSKS' region element. Lys-227 is a binding site for ATP.

This sequence belongs to the class-I aminoacyl-tRNA synthetase family. GluQ subfamily. Zn(2+) is required as a cofactor.

In terms of biological role, catalyzes the tRNA-independent activation of glutamate in presence of ATP and the subsequent transfer of glutamate onto a tRNA(Asp). Glutamate is transferred on the 2-amino-5-(4,5-dihydroxy-2-cyclopenten-1-yl) moiety of the queuosine in the wobble position of the QUC anticodon. In Vibrio parahaemolyticus serotype O3:K6 (strain RIMD 2210633), this protein is Glutamyl-Q tRNA(Asp) synthetase.